A 476-amino-acid polypeptide reads, in one-letter code: Protein Cep89 homolog (476 aa).

2 disordered regions span residues 1–29 (MSTR…KKNR) and 172–193 (LGEG…APYP). A compositionally biased stretch (polar residues) spans 180-190 (GGSTKVSSSSA).

It localises to the cytoplasm. The protein localises to the cytosol. It is found in the mitochondrion intermembrane space. Functionally, required for mitochondrial complex IV activity. May be involved in non-associative learning. The polypeptide is Protein Cep89 homolog (Cep89) (Drosophila melanogaster (Fruit fly)).